The primary structure comprises 126 residues: Fluoride-specific ion channel FluC (126 aa).

Transmembrane regions (helical) follow at residues 4–24 (SILAVGIGGALGSLFRWFLGI), 35–55 (LGTFAANVIAGYVIGVAVAGF), 68–88 (FVITGLMGGLSTFSTFSAEVV), and 103–123 (IVIHVGASLVMTILGIATVSL). The Na(+) site is built by glycine 75 and serine 78.

Belongs to the fluoride channel Fluc/FEX (TC 1.A.43) family.

The protein localises to the cell inner membrane. The enzyme catalyses fluoride(in) = fluoride(out). Na(+) is not transported, but it plays an essential structural role and its presence is essential for fluoride channel function. In terms of biological role, fluoride-specific ion channel. Important for reducing fluoride concentration in the cell, thus reducing its toxicity. This is Fluoride-specific ion channel FluC from Paraburkholderia xenovorans (strain LB400).